Here is a 239-residue protein sequence, read N- to C-terminus: Ribonuclease PH (239 aa).

Phosphate contacts are provided by residues Arg-87 and 125–127 (GTR).

Belongs to the RNase PH family. As to quaternary structure, homohexameric ring arranged as a trimer of dimers.

It catalyses the reaction tRNA(n+1) + phosphate = tRNA(n) + a ribonucleoside 5'-diphosphate. Phosphorolytic 3'-5' exoribonuclease that plays an important role in tRNA 3'-end maturation. Removes nucleotide residues following the 3'-CCA terminus of tRNAs; can also add nucleotides to the ends of RNA molecules by using nucleoside diphosphates as substrates, but this may not be physiologically important. Probably plays a role in initiation of 16S rRNA degradation (leading to ribosome degradation) during starvation. The sequence is that of Ribonuclease PH from Pseudomonas aeruginosa (strain LESB58).